Consider the following 546-residue polypeptide: Light-independent protochlorophyllide reductase subunit B (546 aa).

Position 36 (D36) interacts with [4Fe-4S] cluster. The active-site Proton donor is the D287. 422 to 423 contributes to the substrate binding site; that stretch reads GL. The tract at residues 443–501 is disordered; it reads PSHLSAHRPTGEAVGDAVGEPPAAPRDQAAPAATLDGSAAQSDPARTTPPGAPSWEDSA.

The protein belongs to the ChlB/BchB/BchZ family. In terms of assembly, protochlorophyllide reductase is composed of three subunits; BchL, BchN and BchB. Forms a heterotetramer of two BchB and two BchN subunits. [4Fe-4S] cluster is required as a cofactor.

The enzyme catalyses chlorophyllide a + oxidized 2[4Fe-4S]-[ferredoxin] + 2 ADP + 2 phosphate = protochlorophyllide a + reduced 2[4Fe-4S]-[ferredoxin] + 2 ATP + 2 H2O. The protein operates within porphyrin-containing compound metabolism; bacteriochlorophyll biosynthesis (light-independent). Component of the dark-operative protochlorophyllide reductase (DPOR) that uses Mg-ATP and reduced ferredoxin to reduce ring D of protochlorophyllide (Pchlide) to form chlorophyllide a (Chlide). This reaction is light-independent. The NB-protein (BchN-BchB) is the catalytic component of the complex. The polypeptide is Light-independent protochlorophyllide reductase subunit B (Rhodospirillum rubrum (strain ATCC 11170 / ATH 1.1.1 / DSM 467 / LMG 4362 / NCIMB 8255 / S1)).